We begin with the raw amino-acid sequence, 430 residues long: Protein DSE3 (430 aa).

Position 395 is a phosphoserine (Ser-395).

Its subcellular location is the bud neck. Functionally, may be involved in the establishment of the daughter fate. This is Protein DSE3 (DSE3) from Saccharomyces cerevisiae (strain ATCC 204508 / S288c) (Baker's yeast).